Reading from the N-terminus, the 34-residue chain is Photosystem II reaction center protein M (34 aa).

A helical transmembrane segment spans residues I5–I25.

It belongs to the PsbM family. PSII is composed of 1 copy each of membrane proteins PsbA, PsbB, PsbC, PsbD, PsbE, PsbF, PsbH, PsbI, PsbJ, PsbK, PsbL, PsbM, PsbT, PsbX, PsbY, PsbZ, Psb30/Ycf12, at least 3 peripheral proteins of the oxygen-evolving complex and a large number of cofactors. It forms dimeric complexes.

It localises to the plastid. It is found in the chloroplast thylakoid membrane. Functionally, one of the components of the core complex of photosystem II (PSII). PSII is a light-driven water:plastoquinone oxidoreductase that uses light energy to abstract electrons from H(2)O, generating O(2) and a proton gradient subsequently used for ATP formation. It consists of a core antenna complex that captures photons, and an electron transfer chain that converts photonic excitation into a charge separation. This subunit is found at the monomer-monomer interface. This Gnetum parvifolium (Small-leaved jointfir) protein is Photosystem II reaction center protein M.